We begin with the raw amino-acid sequence, 211 residues long: FMN-dependent NADH:quinone oxidoreductase 3 (211 aa).

An FMN-binding site is contributed by 17–19; it reads SFS.

It belongs to the azoreductase type 1 family. In terms of assembly, homodimer. The cofactor is FMN.

The enzyme catalyses 2 a quinone + NADH + H(+) = 2 a 1,4-benzosemiquinone + NAD(+). It catalyses the reaction N,N-dimethyl-1,4-phenylenediamine + anthranilate + 2 NAD(+) = 2-(4-dimethylaminophenyl)diazenylbenzoate + 2 NADH + 2 H(+). Quinone reductase that provides resistance to thiol-specific stress caused by electrophilic quinones. Functionally, also exhibits azoreductase activity. Catalyzes the reductive cleavage of the azo bond in aromatic azo compounds to the corresponding amines. The protein is FMN-dependent NADH:quinone oxidoreductase 3 of Halalkalibacterium halodurans (strain ATCC BAA-125 / DSM 18197 / FERM 7344 / JCM 9153 / C-125) (Bacillus halodurans).